We begin with the raw amino-acid sequence, 350 residues long: D-guloside 3-dehydrogenase (350 aa).

The protein belongs to the zinc-containing alcohol dehydrogenase family. Zn(2+) serves as cofactor.

The enzyme catalyses a D-guloside + NAD(+) = a 3-dehydro-D-guloside + NADH + H(+). Catalyzes the NAD(+)-dependent oxidation of the hydroxyl group at C3 of D-gulosides leading to 3-dehydro-D-gulosides. Probably functions in a metabolic pathway that transforms D-gulosides to D-glucosides. Is also able to catalyze the reverse reactions, i.e. the NADH-dependent reduction of the oxo group at C3 of 3-dehydro-D-gulosides leading to D-gulosides. In vitro, can oxidize D-gulose and methyl beta-D-guloside, and reduce methyl alpha-3-dehydro-D-guloside and methyl beta-3-dehydro-D-guloside. However, the actual specific physiological substrates for this metabolic pathway are unknown. The polypeptide is D-guloside 3-dehydrogenase (ycjQ) (Escherichia coli (strain K12)).